The following is a 222-amino-acid chain: Noggin (222 aa).

The N-terminal stretch at 1–19 is a signal peptide; that stretch reads MDHSQCLVTIYALMVFLGL. A glycan (N-linked (GlcNAc...) asparagine) is linked at Asn-61. Disulfide bonds link Cys-145–Cys-182, Cys-168–Cys-218, Cys-174–Cys-220, and Cys-197–Cys-205.

It belongs to the noggin family. As to quaternary structure, homodimer.

The protein localises to the secreted. Patterns the embryo by interrupting bone morphogenetic proteins (BMP) signaling. Binds BMP-4 and BMP-2 with high affinity. Can abolish BMP-4 activity by blocking binding to cognate cell-surface receptors. Capable of inducing dorsal development in embryos. Causes dorsal mesodermal differentiation of animal cap ectoderm when coexpressed with xWNT-8 and nuclear, sequence-specific DNA-binding protein xBRA. None of these molecules causes dorsal mesoderm formation when expressed alone. This Xenopus laevis (African clawed frog) protein is Noggin (nog).